Here is a 226-residue protein sequence, read N- to C-terminus: Glutathione S-transferase kappa 1 (226 aa).

Residues 15–17 (SPY), Asn-53, and 199–200 (SD) each bind glutathione.

Belongs to the GST superfamily. Kappa family.

It catalyses the reaction RX + glutathione = an S-substituted glutathione + a halide anion + H(+). This chain is Glutathione S-transferase kappa 1 (gstk-1), found in Caenorhabditis elegans.